Here is a 650-residue protein sequence, read N- to C-terminus: Chaperone protein HtpG (650 aa).

Residues 1–349 (MTKTTKKFET…SSDLPLNVSR (349 aa)) are a; substrate-binding. Residues 350–566 (EILQEDVQIK…EHGLNANMER (217 aa)) are b. Residues 567 to 650 (ILRAMNQDVP…VADGKAAAGE (84 aa)) are c.

This sequence belongs to the heat shock protein 90 family. In terms of assembly, homodimer.

It localises to the cytoplasm. Its function is as follows. Molecular chaperone. Has ATPase activity. This chain is Chaperone protein HtpG, found in Geobacter metallireducens (strain ATCC 53774 / DSM 7210 / GS-15).